The sequence spans 346 residues: Partitioning defective 6 homolog alpha (346 aa).

Residues 1 to 116 (MARPQRTPAR…SNSLQRRKKG (116 aa)) form an interaction with PRKCI and PRKCZ region. Residues 15 to 95 (IVEVKSKFDA…PPLRLLVQKR (81 aa)) form the PB1 domain. Positions 126-253 (RTRPPLLISL…VTVKPANQRN (128 aa)) are interaction with PARD3 and CDC42. The Pseudo-CRIB domain occupies 133-150 (ISLPQDFRQVSSVIDVDL). Positions 157–250 (RVRLHKHGSD…NLIVTVKPAN (94 aa)) constitute a PDZ domain. A disordered region spans residues 257–346 (RGASGRLTGP…IRGDGSGFSL (90 aa)). Residues Ser278 and Ser345 each carry the phosphoserine modification.

This sequence belongs to the PAR6 family. Interacts with MAP2K5. Interacts with PARD3. Interacts with GTP-bound forms of CDC42, RHOQ/TC10 and RAC1. Interacts with the N-terminal part of PRKCI and PRKCZ. Part of a complex with PARD3, CDC42 or RAC1 and PRKCI or PRKCZ. Part of a complex with LLGL1 and PRKCI. Interacts with human T-cell leukemia virus type I TAX protein. Interacts with PALS1 and CRB3. Interacts with TGFBR1; involved in TGF-beta induced epithelial to mesenchymal transition. Interacts with ECT2 ('Thr-359' phosphorylated form) and PRKCI. Interacts with DCTN1 and PCM1. Post-translationally, phosphorylated by the TGF-beta receptor. Ubiquitinated by the SCF(FBXO31) complex, leading to its proteasomal degradation. Expressed in pancreas, skeletal muscle, brain and heart. Weakly expressed in kidney and placenta.

It localises to the cytoplasm. It is found in the cell membrane. Its subcellular location is the cell projection. The protein localises to the ruffle. The protein resides in the cell junction. It localises to the tight junction. It is found in the cytoskeleton. Its subcellular location is the microtubule organizing center. The protein localises to the centrosome. The protein resides in the centriolar satellite. Functionally, adapter protein involved in asymmetrical cell division and cell polarization processes. Probably involved in the formation of epithelial tight junctions. Association with PARD3 may prevent the interaction of PARD3 with F11R/JAM1, thereby preventing tight junction assembly. The PARD6-PARD3 complex links GTP-bound Rho small GTPases to atypical protein kinase C proteins. Regulates centrosome organization and function. Essential for the centrosomal recruitment of key proteins that control centrosomal microtubule organization. The protein is Partitioning defective 6 homolog alpha (PARD6A) of Homo sapiens (Human).